A 381-amino-acid polypeptide reads, in one-letter code: Guanine nucleotide-binding protein G(s) subunit alpha (381 aa).

Cys-3 is lipidated: S-palmitoyl cysteine. The G-alpha domain maps to 36–381; it reads ALHRLLLLGA…RMHLQKYELL (346 aa). Residues 39–52 are G1 motif; the sequence is RLLLLGAGESGKST. GTP is bound by residues 44-51, 183-189, 208-212, 277-280, and Ala-353; these read GAGESGKS, LRCRVLT, GVGGQ, and NKQD. Mg(2+)-binding residues include Ser-51 and Thr-189. Positions 181 to 189 are G2 motif; it reads DILRCRVLT. The interval 204–213 is G3 motif; that stretch reads FYMFGVGGQR. Positions 273 to 280 are G4 motif; it reads ILFLNKQD. The tract at residues 351–356 is G5 motif; that stretch reads TTAVDT.

Belongs to the G-alpha family. G(s) subfamily. G proteins are composed of 3 units; alpha, beta and gamma. The alpha chain contains the guanine nucleotide binding site.

In terms of biological role, guanine nucleotide-binding proteins (G proteins) are involved as modulators or transducers in various transmembrane signaling systems. The G(s) protein is involved in hormonal regulation of adenylate cyclase: it activates the cyclase in response to beta-adrenergic stimuli. The chain is Guanine nucleotide-binding protein G(s) subunit alpha from Geodia cydonium (Sponge).